Here is a 423-residue protein sequence, read N- to C-terminus: COP9 signalosome complex subunit 3 (423 aa).

The residue at position 2 (alanine 2) is an N-acetylalanine. In terms of domain architecture, PCI spans 197 to 365 (NFERALYFYE…GMVSFHDNPE (169 aa)). The segment at 402–423 (QFVQKSMGSQEDDSGNKPSSYS) is disordered. Phosphoserine occurs at positions 407, 410, and 423.

The protein belongs to the CSN3 family. Component of the CSN complex, composed of COPS1/GPS1, COPS2, COPS3, COPS4, COPS5, COPS6, COPS7 (COPS7A or COPS7B), COPS8 and COPS9. In the complex, it probably interacts directly with COPS1, COPS4, COPS8 and COPS9. Interacts with CK2 and PKD. Interacts with the translation initiation factor EIF3S6 and IKBKG. Interacts with ERCC6. As to expression, widely expressed.

It is found in the cytoplasm. The protein resides in the nucleus. In terms of biological role, component of the COP9 signalosome complex (CSN), a complex involved in various cellular and developmental processes. The CSN complex is an essential regulator of the ubiquitin (Ubl) conjugation pathway by mediating the deneddylation of the cullin subunits of SCF-type E3 ligase complexes, leading to decrease the Ubl ligase activity of SCF-type complexes such as SCF, CSA or DDB2. The complex is also involved in phosphorylation of p53/TP53, c-jun/JUN, IkappaBalpha/NFKBIA, ITPK1 and IRF8/ICSBP, possibly via its association with CK2 and PKD kinases. CSN-dependent phosphorylation of TP53 and JUN promotes and protects degradation by the Ubl system, respectively. Essential to maintain the survival of epiblast cells and thus the development of the postimplantation embryo. This chain is COP9 signalosome complex subunit 3 (Cops3), found in Mus musculus (Mouse).